We begin with the raw amino-acid sequence, 111 residues long: MIQVLLVIICLAVFPYQGSSIILESGNVNDFELVYPKKVTVLPTGAMNSAHPCCDPVMCKPKRGEHCISGPCCRNCKFLSPGTICKKAWGDDMNDYCTGISSDCPRNPWKD.

Positions 1-20 (MIQVLLVIICLAVFPYQGSS) are cleaved as a signal peptide. The propeptide occupies 21-46 (IILESGNVNDFELVYPKKVTVLPTGA). Residues 26–111 (GNVNDFELVY…SDCPRNPWKD (86 aa)) form the Disintegrin domain. 4 disulfide bridges follow: Cys53-Cys76, Cys67-Cys73, Cys72-Cys97, and Cys85-Cys104. Residues 89-91 (WGD) carry the Cell attachment site; atypical (WGD) motif. Positions 110–111 (KD) are excised as a propeptide.

The protein belongs to the disintegrin family. Dimeric disintegrin subfamily. Heterodimer; disulfide-linked. Expressed by the venom gland.

The protein resides in the secreted. Its function is as follows. Poor inhibitor of platelet aggregation. The disintegrin inhibits the adhesion of cells expressing the RGD-dependent integrin alpha-5/beta-1 (ITGA5/ITGB1) to immobilized fibronectin. Inhibition on alpha-IIb/beta-3 (ITGA2B/ITGB3) is low. The protein is Disintegrin Eo1 subunit 1 of Echis ocellatus (Ocellated saw-scaled viper).